The chain runs to 601 residues: MTAHPIKNIRNFSIVAHIDHGKSTLADRLIQQTGAVAARDMVEQVLDSMDIERERGITIKAQTVRLEYKAADGEAYILNLMDTPGHVDFAYEVSRSLAACEGSLLVVDASQGVEAQTLANVYHALDAGHEIVPVLNKIDLPAAEPERIKQQIEDVIGLDASHAVMISAKTGVGIDLVLEAIVTRLPPPQGDETAPLKALLVDSWYDAYLGVVVLVRVIDGVLRKGQKIKMMAADAHYEVDRIGVFRPKMQDAEQLSPGEIGFITAQIKQVADTRVGDTITDERRPCAQALPGFKPAQPVVFCGLFPVDAADFEDLRAAMGRLRLNDASFSYEMESSAALGFGFRCGFLGLLHLEIIQERLEREFNLDLIATAPSVIYKIVQRDGDTIELHNPADMPDPTKIETIEEPWIRATILTPDDYLGAVLKLCQERRGVQVDLNYVGKRAMAVYDLPLNEVVFDFYDRLKSISKGYASFDYAITDYRPGDLVKMSILVNAEPVDALSMLVHRDRADTRGRVMVEKLKELIPPHMFQIPIQAAIGGKIIARETVRALRKDVTAKCYGGDASRKRKLLDKQKAGKKKMRQFGKVEIPQEAFIAALKMDG.

The 183-residue stretch at 7 to 189 (KNIRNFSIVA…AIVTRLPPPQ (183 aa)) folds into the tr-type G domain. Residues 19–24 (DHGKST) and 136–139 (NKID) contribute to the GTP site.

The protein belongs to the TRAFAC class translation factor GTPase superfamily. Classic translation factor GTPase family. LepA subfamily.

The protein localises to the cell inner membrane. The enzyme catalyses GTP + H2O = GDP + phosphate + H(+). Its function is as follows. Required for accurate and efficient protein synthesis under certain stress conditions. May act as a fidelity factor of the translation reaction, by catalyzing a one-codon backward translocation of tRNAs on improperly translocated ribosomes. Back-translocation proceeds from a post-translocation (POST) complex to a pre-translocation (PRE) complex, thus giving elongation factor G a second chance to translocate the tRNAs correctly. Binds to ribosomes in a GTP-dependent manner. The protein is Elongation factor 4 of Methylocella silvestris (strain DSM 15510 / CIP 108128 / LMG 27833 / NCIMB 13906 / BL2).